The primary structure comprises 120 residues: Large ribosomal subunit protein uL18 (120 aa).

This sequence belongs to the universal ribosomal protein uL18 family. Part of the 50S ribosomal subunit; part of the 5S rRNA/L5/L18/L25 subcomplex. Contacts the 5S and 23S rRNAs.

Its function is as follows. This is one of the proteins that bind and probably mediate the attachment of the 5S RNA into the large ribosomal subunit, where it forms part of the central protuberance. The chain is Large ribosomal subunit protein uL18 from Bradyrhizobium sp. (strain ORS 278).